The primary structure comprises 1222 residues: Chitin synthase 4 (1222 aa).

Residues 1–108 form a disordered region; that stretch reads MSLPERPGGI…NRIDKDHPNY (108 aa). Over residues 51–68 the composition is skewed to polar residues; sequence LSANSFAETIPSPNNSFV. Asn-64 is a glycosylation site (N-linked (GlcNAc...) asparagine). Over residues 94 to 107 the composition is skewed to basic and acidic residues; it reads IRPERNRIDKDHPN. N-linked (GlcNAc...) asparagine glycosylation occurs at Asn-116. The segment at 136 to 199 is disordered; that stretch reads TTDVSGSRSQ…KSTKKRSTPQ (64 aa). Over residues 137 to 154 the composition is skewed to polar residues; that stretch reads TDVSGSRSQTLDGVSDTS. Residues 176–196 show a composition bias toward basic residues; that stretch reads SAKRVSRHKSGKITKSTKKRS. The next 2 helical transmembrane spans lie at 204-224 and 242-262; these read PPSFWNVYCAIITFWCPDFML and MGLISLILLIMGCVGFITFGF. N-linked (GlcNAc...) asparagine glycosylation is found at Asn-378 and Asn-418. The helical transmembrane segment at 509 to 529 threads the bilayer; sequence YVFLALILSVVGSRFVLALIF. A disordered region spans residues 595-662; the sequence is RFSTVYGPDR…PPSDGPGPAG (68 aa). Polar residues predominate over residues 608-643; that stretch reads NKRVPTTMASSGGSGSQLLHPNSMYRQGNDSRSSFL. Asn-636 and Asn-1031 each carry an N-linked (GlcNAc...) asparagine glycan. Transmembrane regions (helical) follow at residues 1056-1076, 1090-1110, and 1116-1136; these read FIVFVELMGTLVLPAAIAFTF, VIPLILLALILGLPAVLIVIT, and YLVWMMIYLFSLPVWNFVLPV. The interval 1201-1222 is disordered; that stretch reads GGGNSWSMPPGHQYHDDYYSDA. Positions 1213–1222 are enriched in basic and acidic residues; that stretch reads QYHDDYYSDA.

The protein belongs to the chitin synthase family. Class IV subfamily.

It is found in the cell membrane. The catalysed reaction is [(1-&gt;4)-N-acetyl-beta-D-glucosaminyl](n) + UDP-N-acetyl-alpha-D-glucosamine = [(1-&gt;4)-N-acetyl-beta-D-glucosaminyl](n+1) + UDP + H(+). Functionally, polymerizes chitin, a structural polymer of the cell wall and septum, by transferring the sugar moiety of UDP-GlcNAc to the non-reducing end of the growing chitin polymer. Plays a role in cell wall integrity and is involved in tolerance to hyperosmotic conditions. Required to successfully penetrate the host plants and thus plays a key role in pathogenicity. The protein is Chitin synthase 4 of Verticillium dahliae (strain VdLs.17 / ATCC MYA-4575 / FGSC 10137) (Verticillium wilt).